We begin with the raw amino-acid sequence, 324 residues long: D-alanine--D-alanine ligase (324 aa).

One can recognise an ATP-grasp domain in the interval 112 to 312 (KAVLAAAGVT…FDQLVLWIVE (201 aa)). Residue 139-193 (LQPPYVVKPNAEGSSVGVFIIKEGANRPPEEVGAPSWTFGEEVMVEPYIQGMELA) coordinates ATP. 3 residues coordinate Mg(2+): aspartate 265, glutamate 279, and asparagine 281.

This sequence belongs to the D-alanine--D-alanine ligase family. Mg(2+) is required as a cofactor. It depends on Mn(2+) as a cofactor.

It is found in the cytoplasm. It catalyses the reaction 2 D-alanine + ATP = D-alanyl-D-alanine + ADP + phosphate + H(+). It participates in cell wall biogenesis; peptidoglycan biosynthesis. Cell wall formation. The protein is D-alanine--D-alanine ligase of Caulobacter vibrioides (strain ATCC 19089 / CIP 103742 / CB 15) (Caulobacter crescentus).